Consider the following 223-residue polypeptide: MVKSKRNVVVNMTKVTKNPGEKKKKLVSTIKDIVDQYKFIYLFTFENMRNNKLKSVRTEWSTSKFLFGKNKVLSVGLGKSEEDELKPNLHKLTEHLEGECGLFFTNEPKDKVFEYFTNYSEKDFPRSGFVSEETITIKEGPIVGMTHSMETYLRGLGLPTTLKNGVIFVDREYTLCEAGVAVTPEQSQLLKLFNHEISEFKFHIKGFWNEDEFTLCEEESQEE.

The protein belongs to the universal ribosomal protein uL10 family. As to quaternary structure, associates with the pre-60S ribosomal particle.

The protein localises to the nucleus. It is found in the nucleolus. The protein resides in the cytoplasm. Component of the ribosome assembly machinery. Nuclear paralog of the ribosomal protein P0, it binds pre-60S subunits at an early stage of assembly in the nucleolus, and is replaced by P0 in cytoplasmic pre-60S subunits and mature 80S ribosomes. In Dictyostelium discoideum (Social amoeba), this protein is Ribosome assembly factor mrt4.